A 206-amino-acid chain; its full sequence is MILLKRTKIRGVSVSFVSLQRRTHSRLVNPIRQQHQQITKQRSSKILKNAHFYDFRSLPKVPTTQYLEARELTRDILYSGYRPVMYPVKENPLFRDKKRKSLQTLLTMNEKTNAEAKTIDEKKHKNILFGERGTGGIMSGGVNGTWKYNPTVPNELLPFNWWSTSSMGMEYFPEWKNVPPYMMRKLKPFDKALQMRLTHKSKKKMK.

Residues 1–24 (MILLKRTKIRGVSVSFVSLQRRTH) constitute a mitochondrion transit peptide.

Its subcellular location is the mitochondrion envelope. Its function is as follows. Required for degradation of unstable forms of cytochrome c. This Saccharomyces cerevisiae (strain ATCC 204508 / S288c) (Baker's yeast) protein is Protein SUE1, mitochondrial.